The sequence spans 214 residues: Cell division protein SepF (214 aa).

The tract at residues 23–70 (YYDDRAPSRGFPRPRFDDGYGRYDGDDYDDPRREPADYPPPAGYRGGY) is disordered. Residues 36–58 (PRFDDGYGRYDGDDYDDPRREPA) show a composition bias toward basic and acidic residues.

The protein belongs to the SepF family. As to quaternary structure, homodimer. Interacts with FtsZ.

It is found in the cytoplasm. Cell division protein that is part of the divisome complex and is recruited early to the Z-ring. Probably stimulates Z-ring formation, perhaps through the cross-linking of FtsZ protofilaments. Its function overlaps with FtsA. In Mycobacterium avium (strain 104), this protein is Cell division protein SepF.